Consider the following 443-residue polypeptide: Exodeoxyribonuclease 7 large subunit (443 aa).

It belongs to the XseA family. Heterooligomer composed of large and small subunits.

It is found in the cytoplasm. It catalyses the reaction Exonucleolytic cleavage in either 5'- to 3'- or 3'- to 5'-direction to yield nucleoside 5'-phosphates.. Functionally, bidirectionally degrades single-stranded DNA into large acid-insoluble oligonucleotides, which are then degraded further into small acid-soluble oligonucleotides. The chain is Exodeoxyribonuclease 7 large subunit from Legionella pneumophila (strain Paris).